The primary structure comprises 293 residues: Elongation factor Ts (293 aa).

Residues 81 to 84 (TDFV) are involved in Mg(2+) ion dislocation from EF-Tu.

This sequence belongs to the EF-Ts family.

It is found in the cytoplasm. In terms of biological role, associates with the EF-Tu.GDP complex and induces the exchange of GDP to GTP. It remains bound to the aminoacyl-tRNA.EF-Tu.GTP complex up to the GTP hydrolysis stage on the ribosome. The sequence is that of Elongation factor Ts from Methylococcus capsulatus (strain ATCC 33009 / NCIMB 11132 / Bath).